Here is a 310-residue protein sequence, read N- to C-terminus: MEILNEPSSTYHQPVLLEESLQGLAIQPDGIYIDTTFGGGGHAKAILAQLKRGKLFAFDQDEDAESIASTWHDPNFTFIRANSRFIQRFLAYHQIEKIDGLIADLGVSSYQIDTALRGFSTRSEGPLDMRMDQSSSLTASQIVNTYSFEALTQLFRTYGELHSAPALAKALIAARTKHPIETTQSLKEIALPFSPPRKSAKFLAQVFQALRIEVNDELGALKSLLEQSLQLLKPGGRLVIISYHSLEDRLVKRFIKTGNFEGELDKDMYGNPLQPFVPVYKKAIVPTEEELVINSRSRSAKLRVGERTAL.

S-adenosyl-L-methionine is bound by residues 40 to 42, Asp59, Phe89, Asp104, and Gln111; that span reads GGH.

It belongs to the methyltransferase superfamily. RsmH family.

Its subcellular location is the cytoplasm. The catalysed reaction is cytidine(1402) in 16S rRNA + S-adenosyl-L-methionine = N(4)-methylcytidine(1402) in 16S rRNA + S-adenosyl-L-homocysteine + H(+). Specifically methylates the N4 position of cytidine in position 1402 (C1402) of 16S rRNA. The sequence is that of Ribosomal RNA small subunit methyltransferase H from Amoebophilus asiaticus (strain 5a2).